We begin with the raw amino-acid sequence, 312 residues long: Malate dehydrogenase (312 aa).

Residues 7–12 (GAGNVG) and Asp-32 contribute to the NAD(+) site. Substrate contacts are provided by Arg-82 and Arg-88. Residues Asn-95 and 118–120 (VSN) contribute to the NAD(+) site. 2 residues coordinate substrate: Asn-120 and Arg-151. The active-site Proton acceptor is His-175.

It belongs to the LDH/MDH superfamily. MDH type 3 family.

The catalysed reaction is (S)-malate + NAD(+) = oxaloacetate + NADH + H(+). In terms of biological role, catalyzes the reversible oxidation of malate to oxaloacetate. The sequence is that of Malate dehydrogenase from Cytophaga hutchinsonii (strain ATCC 33406 / DSM 1761 / CIP 103989 / NBRC 15051 / NCIMB 9469 / D465).